We begin with the raw amino-acid sequence, 451 residues long: tRNA-2-methylthio-N(6)-dimethylallyladenosine synthase (451 aa).

The 118-residue stretch at Lys3 to Lys120 folds into the MTTase N-terminal domain. Residues Cys12, Cys49, Cys83, Cys156, Cys160, and Cys163 each contribute to the [4Fe-4S] cluster site. In terms of domain architecture, Radical SAM core spans Arg142–Asp374. The 65-residue stretch at Leu377–Gly441 folds into the TRAM domain.

This sequence belongs to the methylthiotransferase family. MiaB subfamily. In terms of assembly, monomer. It depends on [4Fe-4S] cluster as a cofactor.

Its subcellular location is the cytoplasm. It carries out the reaction N(6)-dimethylallyladenosine(37) in tRNA + (sulfur carrier)-SH + AH2 + 2 S-adenosyl-L-methionine = 2-methylsulfanyl-N(6)-dimethylallyladenosine(37) in tRNA + (sulfur carrier)-H + 5'-deoxyadenosine + L-methionine + A + S-adenosyl-L-homocysteine + 2 H(+). Catalyzes the methylthiolation of N6-(dimethylallyl)adenosine (i(6)A), leading to the formation of 2-methylthio-N6-(dimethylallyl)adenosine (ms(2)i(6)A) at position 37 in tRNAs that read codons beginning with uridine. This chain is tRNA-2-methylthio-N(6)-dimethylallyladenosine synthase, found in Marinomonas sp. (strain MWYL1).